A 146-amino-acid chain; its full sequence is Arginine vasopressin-induced protein 1 (146 aa).

Disordered regions lie at residues Met-1 to Ala-31 and Arg-80 to His-146. Residues Arg-80–Arg-92 are compositionally biased toward basic residues. Residues Gln-106–Arg-123 are compositionally biased toward polar residues.

Its function is as follows. May be involved in MAP kinase activation, epithelial sodium channel (ENaC) down-regulation and cell cycling. This Rattus norvegicus (Rat) protein is Arginine vasopressin-induced protein 1 (Avpi1).